Reading from the N-terminus, the 424-residue chain is Probable biofilm formation methyltransferase WspC (424 aa).

The region spanning 1 to 263 (MNEQRFFRFL…IAQSFAYVRH (263 aa)) is the CheR-type methyltransferase domain. S-adenosyl-L-methionine-binding positions include threonine 68, arginine 72, glutamate 109, aspartate 133, 187-188 (NV), and 206-207 (RN). A TPR repeat occupies 355 to 388 (AQVYYWLGLLSDTEGDAQQALSHYRKALYLEPQH).

In terms of assembly, monomer. The TPR repeat does not mediate self-association.

In terms of biological role, involved in biofilm formation. The chain is Probable biofilm formation methyltransferase WspC (wspC) from Pseudomonas putida (strain ATCC 47054 / DSM 6125 / CFBP 8728 / NCIMB 11950 / KT2440).